The sequence spans 150 residues: Protein-export protein SecB (150 aa).

It belongs to the SecB family. Homotetramer, a dimer of dimers. One homotetramer interacts with 1 SecA dimer.

The protein localises to the cytoplasm. One of the proteins required for the normal export of preproteins out of the cell cytoplasm. It is a molecular chaperone that binds to a subset of precursor proteins, maintaining them in a translocation-competent state. It also specifically binds to its receptor SecA. This is Protein-export protein SecB from Psychrobacter cryohalolentis (strain ATCC BAA-1226 / DSM 17306 / VKM B-2378 / K5).